The following is a 473-amino-acid chain: Glutamate--tRNA ligase 1 (473 aa).

The short motif at 11-21 (PSPTGFLHIGG) is the 'HIGH' region element. Residues 111–132 (REQARKEGRPPRYDGRWRDRAE) form a disordered region. Positions 240-244 (KLSKR) match the 'KMSKS' region motif. Lys243 contacts ATP.

This sequence belongs to the class-I aminoacyl-tRNA synthetase family. Glutamate--tRNA ligase type 1 subfamily. In terms of assembly, monomer.

The protein resides in the cytoplasm. It carries out the reaction tRNA(Glu) + L-glutamate + ATP = L-glutamyl-tRNA(Glu) + AMP + diphosphate. Functionally, catalyzes the attachment of glutamate to tRNA(Glu) in a two-step reaction: glutamate is first activated by ATP to form Glu-AMP and then transferred to the acceptor end of tRNA(Glu). This is Glutamate--tRNA ligase 1 from Beijerinckia indica subsp. indica (strain ATCC 9039 / DSM 1715 / NCIMB 8712).